The following is a 586-amino-acid chain: Chaperone protein HscA homolog (586 aa).

The protein belongs to the heat shock protein 70 family.

Chaperone involved in the maturation of iron-sulfur cluster-containing proteins. Has a low intrinsic ATPase activity which is markedly stimulated by HscB. This is Chaperone protein HscA homolog from Rickettsia typhi (strain ATCC VR-144 / Wilmington).